The chain runs to 359 residues: Glycerol-1-phosphate dehydrogenase [NAD(P)+] (359 aa).

NAD(+) contacts are provided by residues 107–111 (GRVID) and 129–132 (TAAS). Residue aspartate 134 participates in substrate binding. Residue serine 138 coordinates NAD(+). Aspartate 181 provides a ligand contact to substrate. 2 residues coordinate Zn(2+): aspartate 181 and histidine 261. Residue histidine 265 participates in substrate binding. A Zn(2+)-binding site is contributed by histidine 277.

Belongs to the glycerol-1-phosphate dehydrogenase family. It depends on Zn(2+) as a cofactor.

It localises to the cytoplasm. The enzyme catalyses sn-glycerol 1-phosphate + NAD(+) = dihydroxyacetone phosphate + NADH + H(+). The catalysed reaction is sn-glycerol 1-phosphate + NADP(+) = dihydroxyacetone phosphate + NADPH + H(+). It functions in the pathway membrane lipid metabolism; glycerophospholipid metabolism. Functionally, catalyzes the NAD(P)H-dependent reduction of dihydroxyacetonephosphate (DHAP or glycerone phosphate) to glycerol 1-phosphate (G1P). The G1P thus generated is used as the glycerophosphate backbone of phospholipids in the cellular membranes of Archaea. This Methanospirillum hungatei JF-1 (strain ATCC 27890 / DSM 864 / NBRC 100397 / JF-1) protein is Glycerol-1-phosphate dehydrogenase [NAD(P)+].